Consider the following 1615-residue polypeptide: Mediator of RNA polymerase II transcription subunit 23 (1615 aa).

Disordered regions lie at residues 40-67 and 1230-1270; these read RQKP…DLPP and SSSS…NASE. Residues 41-51 are compositionally biased toward basic and acidic residues; the sequence is QKPDESLRDPP. Residues 1230 to 1241 are compositionally biased toward low complexity; it reads SSSSNCSSRSGS.

Belongs to the Mediator complex subunit 23 family. Component of the Mediator complex.

It is found in the nucleus. Component of the Mediator complex, a coactivator involved in the regulated transcription of nearly all RNA polymerase II-dependent genes. Mediator functions as a bridge to convey information from gene-specific regulatory proteins to the basal RNA polymerase II transcription machinery. The Mediator complex, having a compact conformation in its free form, is recruited to promoters by direct interactions with regulatory proteins and serves for the assembly of a functional preinitiation complex with RNA polymerase II and the general transcription factors. In Arabidopsis thaliana (Mouse-ear cress), this protein is Mediator of RNA polymerase II transcription subunit 23 (MED23).